Reading from the N-terminus, the 464-residue chain is MNRIGSLYFNTKFVKSKVCNSTYKAFPLIINHHTMASFQIQIISETLIKPSSPTPPSLKQHRFSDYDKTMHHMYIPAAFLYTSHGHGITSTDEVSQLLKNSLSKTLSHYYHFAGRLVGDSHVDCNDMGVKLFEVRVRCPMTEVLKRPNTDAKDLVFPKGLPWSMGEGDILVVAQITYFDCGGIAISTDMSHKIVDVSSIATFMKDWAAMARNSSHQPYPVIVSPTILPMDDIPATAEDDIMKENICQSRRFLFDDSKIVELKAMAANSGVENPTRVEVVTAILHKCAVTASTTALGSFMPNILLLAVNLRSIVSPPLANTSIGNISSCCAISVTHENQMKFPLLVGELRRSKTKLLQNYGKQLKKSELLFLNGTDKAQKLSDGDSFDCFIFTSWCRSPLYEVDFGWGRPVQVYVPSCPIKNTFRLTDTPAQDGIQALVTLEENVMPIFENDEELLAFASLIKDS.

Catalysis depends on proton acceptor residues His191 and Asp403.

The protein belongs to the plant acyltransferase family. In terms of assembly, monomer. Mainly expressed in roots.

Its subcellular location is the cytoplasm. It catalyses the reaction 17,18-epoxy-17-hydroxycur-19-ene + malonyl-CoA = prestrychnine + CoA. Its pathway is alkaloid biosynthesis. In terms of biological role, malonylransferase involved in the biosynthesis of curare monoterpene indole alkaloids (MIAs), natural products such as strychnine, a neurotoxic compound used as a pesticide to control rodents, and its pharmacologically active derivatives, including brucine, used to regulate blood pressure. Curare alkaloids act as animal glycine receptor antagonists. Catalyzes the conversion of 17,18-epoxy-17-hydroxycur-19-ene (Wieland-Gumlich aldehyde) to prestrychnine, which is spontaneously converted into strychnine and isostrychnine. The polypeptide is 17,18-epoxy-17-hydroxycur-19-ene N-malonyltransferase (Strychnos nux-vomica (Poison nut)).